Consider the following 398-residue polypeptide: 8-amino-7-oxononanoate synthase (398 aa).

Arg-23 serves as a coordination point for substrate. 110–111 (GY) contributes to the pyridoxal 5'-phosphate binding site. Position 135 (His-135) interacts with substrate. Residues Ser-181, His-209, and Thr-238 each coordinate pyridoxal 5'-phosphate. Residue Lys-241 is modified to N6-(pyridoxal phosphate)lysine. Thr-355 is a binding site for substrate.

It belongs to the class-II pyridoxal-phosphate-dependent aminotransferase family. BioF subfamily. Homodimer. Requires pyridoxal 5'-phosphate as cofactor.

The catalysed reaction is 6-carboxyhexanoyl-[ACP] + L-alanine + H(+) = (8S)-8-amino-7-oxononanoate + holo-[ACP] + CO2. It functions in the pathway cofactor biosynthesis; biotin biosynthesis. In terms of biological role, catalyzes the decarboxylative condensation of pimeloyl-[acyl-carrier protein] and L-alanine to produce 8-amino-7-oxononanoate (AON), [acyl-carrier protein], and carbon dioxide. This Cellvibrio japonicus (strain Ueda107) (Pseudomonas fluorescens subsp. cellulosa) protein is 8-amino-7-oxononanoate synthase.